A 1319-amino-acid chain; its full sequence is Son of sevenless homolog 1 (1319 aa).

The DH domain occupies Thr-200 to Ile-390. Positions Phe-444–Ser-548 constitute a PH domain. Residues Gly-597–Lys-741 form the N-terminal Ras-GEF domain. In terms of domain architecture, Ras-GEF spans His-780–Arg-1019. Positions Arg-1019 to Val-1101 are disordered. Residues Ser-1078 and Ser-1082 each carry the phosphoserine modification. 2 positions are modified to phosphoserine; by RPS6KA3: Ser-1120 and Ser-1147. Residues Val-1121–Ser-1319 are disordered. Phosphoserine occurs at positions 1164, 1196, and 1215. The segment covering Pro-1194 to Arg-1203 has biased composition (pro residues). Residues Ser-1238–Pro-1250 show a composition bias toward pro residues. The residue at position 1261 (Ser-1261) is a Phosphoserine. The span at Tyr-1296–Gly-1309 shows a compositional bias: basic and acidic residues.

As to quaternary structure, interacts (via C-terminus) with GRB2 (via SH3 domain). Forms a complex with phosphorylated MUC1 and GRB2 (via its SH3 domains). Interacts with phosphorylated LAT2. Interacts with NCK1 and NCK2. Part of a complex consisting of ABI1, EPS8 and SOS1. Interacts (Ser-1120 and Ser-1147 phosphorylated form) with YWHAB and YWHAE. Phosphorylation at Ser-1120 and Ser-1147 by RPS6KA3 create YWHAB and YWHAE binding sites and which contribute to the negative regulation of EGF-induced MAPK1/3 phosphorylation. Expressed in most embryonic and adult tissues.

Promotes the exchange of Ras-bound GDP by GTP. Probably by promoting Ras activation, regulates phosphorylation of MAP kinase MAPK3 in response to EGF. Catalytic component of a trimeric complex that participates in transduction of signals from Ras to Rac by promoting the Rac-specific guanine nucleotide exchange factor (GEF) activity. The protein is Son of sevenless homolog 1 (Sos1) of Mus musculus (Mouse).